The sequence spans 407 residues: Phospholipase A1-II 7 (407 aa).

Catalysis depends on Ser-230, which acts as the Acyl-ester intermediate. Catalysis depends on charge relay system residues Ser-230, Asp-299, and His-336.

The protein belongs to the AB hydrolase superfamily. Lipase family.

It is found in the cytoplasm. In terms of biological role, acylhydrolase that catalyzes the hydrolysis of phospholipids at the sn-1 position. This chain is Phospholipase A1-II 7, found in Oryza sativa subsp. indica (Rice).